We begin with the raw amino-acid sequence, 233 residues long: MREHRPIIALDFPSFEAVKEFLALFPAEESLYLKVGMELYYAAGPEIVSYLKGLGHSVFLDLKLHDIPNTVKSAMKILSQLGVDMTNVHAAGGVEMMKAAREGLGSQAKLIAVTQLTSTSEAQMQEFQNIQTSLQESVIHYAKKTAEAGLDGVVCSAQEVQVIKQATNPDFICLTPGIRPAGVAVGDQKRVMTPADAYQIGSDYIVVGRPITQAEEPVAAYHAIKDEWTQDWN.

Substrate contacts are provided by residues Asp-11, Lys-34, 61 to 70 (DLKLHDIPNT), Thr-117, Arg-179, Gln-188, Gly-208, and Arg-209. Residue Lys-63 is the Proton donor of the active site.

This sequence belongs to the OMP decarboxylase family. Type 1 subfamily. As to quaternary structure, homodimer.

The enzyme catalyses orotidine 5'-phosphate + H(+) = UMP + CO2. The protein operates within pyrimidine metabolism; UMP biosynthesis via de novo pathway; UMP from orotate: step 2/2. Its function is as follows. Catalyzes the decarboxylation of orotidine 5'-monophosphate (OMP) to uridine 5'-monophosphate (UMP). This is Orotidine 5'-phosphate decarboxylase from Streptococcus pneumoniae (strain CGSP14).